We begin with the raw amino-acid sequence, 420 residues long: Gamma-glutamyl phosphate reductase (420 aa).

This sequence belongs to the gamma-glutamyl phosphate reductase family.

It is found in the cytoplasm. The catalysed reaction is L-glutamate 5-semialdehyde + phosphate + NADP(+) = L-glutamyl 5-phosphate + NADPH + H(+). The protein operates within amino-acid biosynthesis; L-proline biosynthesis; L-glutamate 5-semialdehyde from L-glutamate: step 2/2. In terms of biological role, catalyzes the NADPH-dependent reduction of L-glutamate 5-phosphate into L-glutamate 5-semialdehyde and phosphate. The product spontaneously undergoes cyclization to form 1-pyrroline-5-carboxylate. This chain is Gamma-glutamyl phosphate reductase, found in Streptococcus pneumoniae (strain P1031).